We begin with the raw amino-acid sequence, 492 residues long: uncharacterized protein (492 aa).

Helical transmembrane passes span 67 to 87 (VAIM…GGWL), 88 to 108 (ADRV…IMFG), 110 to 130 (IALA…LIIV), 157 to 177 (GFSI…LIVG), 185 to 205 (YHLG…VFAL), 232 to 252 (IGVI…VLTI), 255 to 275 (FIDL…IIMF), 294 to 314 (LFIG…ILAV), 333 to 353 (WFQS…AWLW), 367 to 387 (FSIG…PAMQ), 392 to 412 (LVSP…ELCL), 434 to 454 (SMWF…AGLF), and 464 to 484 (GTIG…SPVI).

This sequence belongs to the major facilitator superfamily. Proton-dependent oligopeptide transporter (POT/PTR) (TC 2.A.17) family.

The protein localises to the cell membrane. This is an uncharacterized protein from Bacillus subtilis (strain 168).